The chain runs to 309 residues: DNA-directed RNA polymerase subunit alpha (309 aa).

Residues 1–227 (MTFQVECVES…ALFEPLKNVS (227 aa)) form an alpha N-terminal domain (alpha-NTD) region. Residues 237–309 (EPTPESQTPI…GIKLQESKVS (73 aa)) are alpha C-terminal domain (alpha-CTD).

Belongs to the RNA polymerase alpha chain family. In terms of assembly, in cyanobacteria the RNAP catalytic core is composed of 2 alpha, 1 beta, 1 beta', 1 gamma and 1 omega subunit. When a sigma factor is associated with the core the holoenzyme is formed, which can initiate transcription.

The enzyme catalyses RNA(n) + a ribonucleoside 5'-triphosphate = RNA(n+1) + diphosphate. Its function is as follows. DNA-dependent RNA polymerase catalyzes the transcription of DNA into RNA using the four ribonucleoside triphosphates as substrates. The protein is DNA-directed RNA polymerase subunit alpha of Synechococcus elongatus (strain ATCC 33912 / PCC 7942 / FACHB-805) (Anacystis nidulans R2).